The following is a 4518-amino-acid chain: Dynein axonemal heavy chain 11 (4518 aa).

The stem stretch occupies residues 1-1857; it reads MAASVAAQEA…LVHICDAQFQ (1857 aa). AAA regions lie at residues 1858-2079, 2139-2368, 2474-2721, and 2819-3068; these read YFYE…VLVV, QMVR…TSFK, TMDP…VFQG, and NYND…EGRH. ATP is bound by residues 1896 to 1903, 2177 to 2184, 2512 to 2519, and 2857 to 2864; these read GPAGTGKT, GNAGTGKS, GNAGVGKT, and GVGGSGKQ. The segment at 3074-3405 is stalk; sequence KSFLEQISLF…GQSIKSFEAQ (332 aa). A coiled-coil region spans residues 3322–3391; it reads LAQANLELAT…NRLVKELEVK (70 aa). AAA regions lie at residues 3461 to 3688 and 3898 to 4124; these read LTDD…EIER and LRNF…VLYN.

Belongs to the dynein heavy chain family. In terms of assembly, consists of at least two heavy chains and a number of intermediate and light chains. Interacts with CFAP45.

Its subcellular location is the cytoplasm. It is found in the cytoskeleton. It localises to the cilium axoneme. Force generating protein of respiratory cilia. Produces force towards the minus ends of microtubules. Dynein has ATPase activity; the force-producing power stroke is thought to occur on release of ADP. In Sus scrofa (Pig), this protein is Dynein axonemal heavy chain 11 (DNAH11).